A 93-amino-acid polypeptide reads, in one-letter code: HIG1 domain family member 1A, mitochondrial (93 aa).

Residues 1–93 (MSTDTGVSLP…YREFWAKPKP (93 aa)) form the HIG1 domain. Serine 2 bears the N-acetylserine mark. Serine 8 bears the Phosphoserine mark. Helical transmembrane passes span 26 to 46 (EAPF…YGLY) and 60 to 80 (LIHM…VGMG).

As to quaternary structure, associates with cytochrome c oxidase (COX, complex IV); proposed complex component. Also associates with respiratory chain supercomplexes.

Its subcellular location is the mitochondrion membrane. The protein resides in the mitochondrion inner membrane. Its function is as follows. Proposed subunit of cytochrome c oxidase (COX, complex IV), which is the terminal component of the mitochondrial respiratory chain that catalyzes the reduction of oxygen to water. May play a role in the assembly of respiratory supercomplexes. The polypeptide is HIG1 domain family member 1A, mitochondrial (HIGD1A) (Homo sapiens (Human)).